Here is a 609-residue protein sequence, read N- to C-terminus: UvrABC system protein C (609 aa).

The region spanning 16–94 is the GIY-YIG domain; sequence SSPGVYRMYD…IKQYMPKYNV (79 aa). In terms of domain architecture, UVR spans 203-238; it reads QQVTKALVAKMEQAAVELNYEQAARYRDQITALRRV.

It belongs to the UvrC family. In terms of assembly, interacts with UvrB in an incision complex.

The protein localises to the cytoplasm. The UvrABC repair system catalyzes the recognition and processing of DNA lesions. UvrC both incises the 5' and 3' sides of the lesion. The N-terminal half is responsible for the 3' incision and the C-terminal half is responsible for the 5' incision. The chain is UvrABC system protein C from Shewanella piezotolerans (strain WP3 / JCM 13877).